The sequence spans 106 residues: Small ribosomal subunit protein bS18 (106 aa).

Positions 1–41 are disordered; the sequence is MAEEHSNQRSQTFNGERTNRPSRKPRGDGERRGRRQGGRRR.

It belongs to the bacterial ribosomal protein bS18 family. In terms of assembly, part of the 30S ribosomal subunit. Forms a tight heterodimer with protein bS6.

Functionally, binds as a heterodimer with protein bS6 to the central domain of the 16S rRNA, where it helps stabilize the platform of the 30S subunit. This chain is Small ribosomal subunit protein bS18, found in Oenococcus oeni (strain ATCC BAA-331 / PSU-1).